The chain runs to 227 residues: Ribonuclease 3 (227 aa).

Residues 6-128 (ASDYQQRIGY…VIAAIYLDAD (123 aa)) form the RNase III domain. E41 contacts Mg(2+). The active site involves D45. Mg(2+)-binding residues include D114 and E117. The active site involves E117. A DRBM domain is found at 155–225 (DPKTRLQEWL…ASHAIDQLDS (71 aa)). A compositionally biased stretch (basic and acidic residues) spans 203–212 (GEGSSRRLAE). The interval 203 to 227 (GEGSSRRLAEQDAASHAIDQLDSNK) is disordered.

This sequence belongs to the ribonuclease III family. Homodimer. The cofactor is Mg(2+).

Its subcellular location is the cytoplasm. The catalysed reaction is Endonucleolytic cleavage to 5'-phosphomonoester.. Its function is as follows. Digests double-stranded RNA. Involved in the processing of primary rRNA transcript to yield the immediate precursors to the large and small rRNAs (23S and 16S). Processes some mRNAs, and tRNAs when they are encoded in the rRNA operon. Processes pre-crRNA and tracrRNA of type II CRISPR loci if present in the organism. The protein is Ribonuclease 3 of Xylella fastidiosa (strain M23).